The chain runs to 66 residues: Large ribosomal subunit protein bL35 (66 aa).

The protein belongs to the bacterial ribosomal protein bL35 family.

This chain is Large ribosomal subunit protein bL35, found in Wigglesworthia glossinidia brevipalpis.